Consider the following 347-residue polypeptide: O-methyltransferase aunE (347 aa).

Residue Trp-166 coordinates S-adenosyl-L-methionine. The Proton acceptor role is filled by His-265.

Belongs to the class I-like SAM-binding methyltransferase superfamily. Cation-independent O-methyltransferase family.

It functions in the pathway secondary metabolite biosynthesis. In terms of biological role, O-methyltransferase; part of the gene cluster that mediates the biosynthesis of aurasperone B, a dimeric gamma-naphthopyrone. The first step in the biosynthesis of aurasperone B is the production of gamma-naphthopyrone precursor YWA1 by the non-reducing polyketide synthase albA, via condensation of one acetyl-CoA starter unit with 6 malonyl-CoA units. YWA1 is then methylated by aunE at position C-6 to yield foncesin which is further methylated at position C-8 by aunD to produce fonsecin B. A key enzyme in the biosynthetic pathway is the cytochrome P450 monooxygenase aunB which catalyzes the oxidative dimerization of fonsecin B to aurasperone B. AunB also catalyzes the oxidative dimerization of rubrofusarin B into aurasperone A. The polypeptide is O-methyltransferase aunE (Aspergillus niger (strain ATCC 1015 / CBS 113.46 / FGSC A1144 / LSHB Ac4 / NCTC 3858a / NRRL 328 / USDA 3528.7)).